The sequence spans 630 residues: Ubiquitin carboxyl-terminal hydrolase MINDY-2 (630 aa).

The segment at 1 to 209 (MESGPESLQP…RVPEEEEGAA (209 aa)) is disordered. A compositionally biased stretch (polar residues) spans 24–33 (GSPQEGQQET). At Ser-94 the chain carries Phosphoserine. Low complexity-rich tracts occupy residues 141-163 (EESA…SCSD) and 170-191 (SPSL…SSEF). Catalysis depends on Cys-267, which acts as the Nucleophile. Residue His-449 is the Proton acceptor of the active site. Residues 508-560 (GQQDQIDQDYLMALSLQQEQQSQEINWEQIPEGISDLELAKKLQEEEDRRASQ) are ubiquitin-binding domain (UBD). Low complexity predominate over residues 564–599 (EQEQAAAAAASASASASASASTQAPQSQPVQASPSS). Residues 564–630 (EQEQAAAAAA…EKEKNSCVIL (67 aa)) form a disordered region. Over residues 606–630 (SERKRKEPREKDKEKEKEKNSCVIL) the composition is skewed to basic and acidic residues.

The protein belongs to the MINDY deubiquitinase family. FAM63 subfamily.

It catalyses the reaction Thiol-dependent hydrolysis of ester, thioester, amide, peptide and isopeptide bonds formed by the C-terminal Gly of ubiquitin (a 76-residue protein attached to proteins as an intracellular targeting signal).. Hydrolase that can remove 'Lys-48'-linked conjugated ubiquitin from proteins. Can also bind to polyubiquitin chains of different linkage types, including 'Lys-6', 'Lys-11', 'Lys-29', 'Lys-33' and 'Lys-63'. May play a regulatory role at the level of protein turnover. The protein is Ubiquitin carboxyl-terminal hydrolase MINDY-2 (MINDY2) of Bos taurus (Bovine).